Consider the following 1040-residue polypeptide: Multidrug resistance protein MdtB (1040 aa).

12 helical membrane-spanning segments follow: residues 16 to 36, 347 to 367, 369 to 389, 396 to 416, 440 to 460, 472 to 492, 537 to 557, 863 to 883, 888 to 908, 911 to 931, 968 to 988, and 998 to 1018; these read FIMRPVATTLLMVAILLAGII, LMMAIALVVMIIYLFLRNIPA, IIPGVAVPLSLIGTFAVMVFL, LTLMALTIATGFVVDDAIVVI, IGFTIISLIFSLIAVLIPLLF, FAITLAVAILISAVVSLTLTP, WLTLSVALSTLLLSVLLWVFI, LGSTVWLIVAAVVAMYIVLGI, FIHPITILSTLPTAGVGALLA, IAGSELDVIAIIGIILLIGIV, ILMTTLAALLGALPLMLSTGV, and IGMVGGLIVSQVLTLFTTPVI.

Belongs to the resistance-nodulation-cell division (RND) (TC 2.A.6) family. MdtB subfamily. As to quaternary structure, part of a tripartite efflux system composed of MdtA, MdtB and MdtC. MdtB forms a heteromultimer with MdtC.

It is found in the cell inner membrane. This chain is Multidrug resistance protein MdtB, found in Shigella boydii serotype 4 (strain Sb227).